A 647-amino-acid chain; its full sequence is Microtubule-associated protein 9 (647 aa).

S2 carries the N-acetylserine modification. Y12 carries the phosphotyrosine modification. Disordered stretches follow at residues 127-323 (KSFS…ELIM), 344-421 (SATA…PDRA), 491-514 (KRLE…EALQ), 530-553 (KNRK…AEKK), 580-600 (NEKR…KQAI), and 613-647 (QERI…AKVF). Basic and acidic residues predominate over residues 133–145 (QNKDEEFEKDKIK). Polar residues predominate over residues 155–166 (IKSTSSAENNSL). Positions 174–186 (PSPRPRSMLKKKS) are enriched in basic residues. Positions 184–210 (KKSHMEEKDGLEDKETALSEELELHSA) form a coiled coil. Positions 187–200 (HMEEKDGLEDKETA) are enriched in basic and acidic residues. Polar residues-rich tracts occupy residues 210-219 (APSSLPTPNG) and 239-249 (CLTSLASSSLK). Residues 268 to 287 (DPNEEITENHNSLKSDENKE) are compositionally biased toward basic and acidic residues. The stretch at 298-328 (AVEKSKESQVTADDLEEEKAKAELIMDDDRT) forms a coiled coil. Over residues 365 to 374 (NNRASSASAR) the composition is skewed to low complexity. Residues 443-628 (MHRIKRIESE…KQKKRHSFLE (186 aa)) adopt a coiled-coil conformation.

Binds to purified microtubules via its C-terminus.

It localises to the cytoplasm. The protein resides in the cytoskeleton. The protein localises to the spindle. Involved in organization of the bipolar mitotic spindle. Required for bipolar spindle assembly, mitosis progression and cytokinesis. May act by stabilizing interphase microtubules. This Homo sapiens (Human) protein is Microtubule-associated protein 9 (MAP9).